The following is a 384-amino-acid chain: F-box only protein 5 (384 aa).

Residues 25 to 67 form a disordered region; that stretch reads EVKGHKVSPRKTGALSLRSPAATNVSTPLESRSKGPHNKENYQ. Positions 45-54 are enriched in polar residues; the sequence is AATNVSTPLE. Residues 55 to 67 show a composition bias toward basic and acidic residues; sequence SRSKGPHNKENYQ. Positions 187–234 constitute an F-box domain; that stretch reads CKLMRKDMRHILARILGLLGDCDLISCTKVSRTWRKIICQDQLALQRW. A ZBR-type zinc finger spans residues 311–359; sequence SLRRCSRCSSPARFDAVMQRAVCTRISCAFEFCTLCQSAFHDSTPCRNT. 8 residues coordinate Zn(2+): Cys315, Cys318, Cys333, Cys338, Cys343, Cys346, His351, and Cys356.

As to quaternary structure, part of a SCF (SKP1-cullin-F-box) protein ligase complex.

The protein resides in the nucleus. It is found in the cytoplasm. It participates in protein modification; protein ubiquitination. Its function is as follows. During embryonic development, regulates the integrity of the genome and therefore the cell cycle progression by preventing rereplication through an APC-Cdh1-dependent mechanism. The polypeptide is F-box only protein 5 (Danio rerio (Zebrafish)).